Here is a 910-residue protein sequence, read N- to C-terminus: Protein translocase subunit SecA (910 aa).

Residues glutamine 87, 105-109 (GEGKT), and aspartate 501 each bind ATP. The Zn(2+) site is built by cysteine 894, cysteine 896, cysteine 905, and histidine 906.

This sequence belongs to the SecA family. As to quaternary structure, monomer and homodimer. Part of the essential Sec protein translocation apparatus which comprises SecA, SecYEG and auxiliary proteins SecDF-YajC and YidC. The cofactor is Zn(2+).

It localises to the cell inner membrane. Its subcellular location is the cytoplasm. The enzyme catalyses ATP + H2O + cellular proteinSide 1 = ADP + phosphate + cellular proteinSide 2.. In terms of biological role, part of the Sec protein translocase complex. Interacts with the SecYEG preprotein conducting channel. Has a central role in coupling the hydrolysis of ATP to the transfer of proteins into and across the cell membrane, serving both as a receptor for the preprotein-SecB complex and as an ATP-driven molecular motor driving the stepwise translocation of polypeptide chains across the membrane. The sequence is that of Protein translocase subunit SecA from Acidiphilium cryptum (strain JF-5).